Reading from the N-terminus, the 579-residue chain is GPI alpha-1,2-mannosyltransferase 4 (579 aa).

8 helical membrane passes run 131-151 (LLLT…APPM), 156-173 (WNAL…VFYT), 180-200 (IEGL…TWGP), 216-236 (LGGI…FAVV), 258-278 (ALVL…TDSW), 369-389 (YLLL…HQEA), 391-411 (FLIP…QPVP), and 416-436 (VVLF…GGLV).

It belongs to the glycosyltransferase 22 family. PIGZ subfamily. In terms of tissue distribution, widely expressed at low level, with highest level in brain and colon.

The protein localises to the endoplasmic reticulum membrane. Its pathway is glycolipid biosynthesis; glycosylphosphatidylinositol-anchor biosynthesis. Its function is as follows. Alpha-1,2-mannosyltransferase that catalyzes the transfer of the fourth mannose, via an alpha-1,2 bond, from a dolichol-phosphate-mannose (Dol-P-Man) to an alpha-D-Man-(1-&gt;2)-alpha-D-Man-(1-&gt;6)-2-PEtn-alpha-D-Man-(1-&gt;4)-alpha-D-GlcN-(1-&gt;6)-(1-radyl,2-acyl-sn-glycero-3-phospho)-2-acyl-inositol (also termed H6) intermediate and participates in the twelfth step of the glycosylphosphatidylinositol-anchor biosynthesis. The presence of a fourth mannose in GPI is facultative, suggesting that it only exists in some tissues. The sequence is that of GPI alpha-1,2-mannosyltransferase 4 from Homo sapiens (Human).